The following is a 125-amino-acid chain: MKHYEVLFILKPTLTEEEVNTKLEFVKEVLTKNSAEIETVVPMGTRKLAYKIKKYERGTYFVIYFKAPTNLIAELERVLRITEEVIRFLIVKYENKKEIAAWEKLSHGIKQSKKEIKPLDAPEIQ.

Belongs to the bacterial ribosomal protein bS6 family.

In terms of biological role, binds together with bS18 to 16S ribosomal RNA. This Campylobacter jejuni subsp. jejuni serotype O:2 (strain ATCC 700819 / NCTC 11168) protein is Small ribosomal subunit protein bS6 (rpsF).